A 214-amino-acid chain; its full sequence is Imidazole glycerol phosphate synthase subunit HisH (214 aa).

The region spanning 3 to 211 (TIAVIDYDMG…VSKVIPKNLA (209 aa)) is the Glutamine amidotransferase type-1 domain. Catalysis depends on C81, which acts as the Nucleophile. Active-site residues include H186 and E188.

As to quaternary structure, heterodimer of HisH and HisF.

The protein resides in the cytoplasm. The catalysed reaction is 5-[(5-phospho-1-deoxy-D-ribulos-1-ylimino)methylamino]-1-(5-phospho-beta-D-ribosyl)imidazole-4-carboxamide + L-glutamine = D-erythro-1-(imidazol-4-yl)glycerol 3-phosphate + 5-amino-1-(5-phospho-beta-D-ribosyl)imidazole-4-carboxamide + L-glutamate + H(+). The enzyme catalyses L-glutamine + H2O = L-glutamate + NH4(+). It functions in the pathway amino-acid biosynthesis; L-histidine biosynthesis; L-histidine from 5-phospho-alpha-D-ribose 1-diphosphate: step 5/9. IGPS catalyzes the conversion of PRFAR and glutamine to IGP, AICAR and glutamate. The HisH subunit catalyzes the hydrolysis of glutamine to glutamate and ammonia as part of the synthesis of IGP and AICAR. The resulting ammonia molecule is channeled to the active site of HisF. This chain is Imidazole glycerol phosphate synthase subunit HisH, found in Trichodesmium erythraeum (strain IMS101).